A 241-amino-acid chain; its full sequence is 1-(5-phosphoribosyl)-5-[(5-phosphoribosylamino)methylideneamino] imidazole-4-carboxamide isomerase (241 aa).

The active-site Proton acceptor is D8. Catalysis depends on D129, which acts as the Proton donor.

This sequence belongs to the HisA/HisF family.

It is found in the cytoplasm. It carries out the reaction 1-(5-phospho-beta-D-ribosyl)-5-[(5-phospho-beta-D-ribosylamino)methylideneamino]imidazole-4-carboxamide = 5-[(5-phospho-1-deoxy-D-ribulos-1-ylimino)methylamino]-1-(5-phospho-beta-D-ribosyl)imidazole-4-carboxamide. Its pathway is amino-acid biosynthesis; L-histidine biosynthesis; L-histidine from 5-phospho-alpha-D-ribose 1-diphosphate: step 4/9. This is 1-(5-phosphoribosyl)-5-[(5-phosphoribosylamino)methylideneamino] imidazole-4-carboxamide isomerase from Novosphingobium aromaticivorans (strain ATCC 700278 / DSM 12444 / CCUG 56034 / CIP 105152 / NBRC 16084 / F199).